A 143-amino-acid polypeptide reads, in one-letter code: Large ribosomal subunit protein uL16c (143 aa).

The protein belongs to the universal ribosomal protein uL16 family. Part of the 50S ribosomal subunit.

Its subcellular location is the plastid. The protein localises to the chloroplast. This is Large ribosomal subunit protein uL16c from Chlorokybus atmophyticus (Soil alga).